Here is a 181-residue protein sequence, read N- to C-terminus: Large ribosomal subunit protein uL10 (181 aa).

The protein belongs to the universal ribosomal protein uL10 family. In terms of assembly, part of the ribosomal stalk of the 50S ribosomal subunit. The N-terminus interacts with L11 and the large rRNA to form the base of the stalk. The C-terminus forms an elongated spine to which L12 dimers bind in a sequential fashion forming a multimeric L10(L12)X complex.

In terms of biological role, forms part of the ribosomal stalk, playing a central role in the interaction of the ribosome with GTP-bound translation factors. This is Large ribosomal subunit protein uL10 from Fervidobacterium nodosum (strain ATCC 35602 / DSM 5306 / Rt17-B1).